The following is a 380-amino-acid chain: uncharacterized protein (380 aa).

HTH tetR-type domains lie at 3–63 (ESAE…KEGL) and 201–262 (VRTR…CAEI). Positions 225 to 244 (TISDITRKSNIRRATFYDHY) form a DNA-binding region, H-T-H motif.

This is an uncharacterized protein from Bacillus subtilis (strain 168).